The sequence spans 736 residues: Epithelial splicing regulatory protein 2 (736 aa).

RRM domains lie at 224 to 301 (TVIR…KATG), 325 to 405 (MIIR…RSTA), and 659 to 736 (ALVR…ACCE).

The protein belongs to the ESRP family.

It is found in the nucleus. MRNA splicing factor that regulates the formation of epithelial cell-specific isoforms. Specifically regulates the expression of FGFR2-IIIb, an epithelial cell-specific isoform of fgfr2. Acts by directly binding specific sequences in mRNAs. Binds the GU-rich sequence motifs in the ISE/ISS-3, a cis-element regulatory region present in the mRNA of fgfr2. The sequence is that of Epithelial splicing regulatory protein 2 (esrp2) from Danio rerio (Zebrafish).